A 397-amino-acid chain; its full sequence is Acetate kinase (397 aa).

Position 8 (Asn8) interacts with Mg(2+). Lys15 lines the ATP pocket. Arg92 is a substrate binding site. Asp149 functions as the Proton donor/acceptor in the catalytic mechanism. ATP contacts are provided by residues 209 to 213 (HLGNG), 283 to 285 (DFR), and 331 to 335 (GVGEN). Residue Glu385 coordinates Mg(2+).

This sequence belongs to the acetokinase family. As to quaternary structure, homodimer. Mg(2+) is required as a cofactor. It depends on Mn(2+) as a cofactor.

The protein localises to the cytoplasm. The enzyme catalyses acetate + ATP = acetyl phosphate + ADP. It functions in the pathway metabolic intermediate biosynthesis; acetyl-CoA biosynthesis; acetyl-CoA from acetate: step 1/2. In terms of biological role, catalyzes the formation of acetyl phosphate from acetate and ATP. Can also catalyze the reverse reaction. The polypeptide is Acetate kinase (Corynebacterium glutamicum (strain ATCC 13032 / DSM 20300 / JCM 1318 / BCRC 11384 / CCUG 27702 / LMG 3730 / NBRC 12168 / NCIMB 10025 / NRRL B-2784 / 534)).